The primary structure comprises 105 residues: uncharacterized protein (105 aa).

Residues 4-26 form a helical membrane-spanning segment; it reads TQILLILFVGILVTTPHDIFIII.

It localises to the membrane. This is an uncharacterized protein from Rickettsia conorii (strain ATCC VR-613 / Malish 7).